The sequence spans 130 residues: Large ribosomal subunit protein bL12 (130 aa).

The protein belongs to the bacterial ribosomal protein bL12 family. Homodimer. Part of the ribosomal stalk of the 50S ribosomal subunit. Forms a multimeric L10(L12)X complex, where L10 forms an elongated spine to which 2 to 4 L12 dimers bind in a sequential fashion. Binds GTP-bound translation factors.

In terms of biological role, forms part of the ribosomal stalk which helps the ribosome interact with GTP-bound translation factors. Is thus essential for accurate translation. This Thermobifida fusca (strain YX) protein is Large ribosomal subunit protein bL12.